Reading from the N-terminus, the 413-residue chain is Interferon-inducible GTPase 1 (413 aa).

Gly-2 is lipidated: N-myristoyl glycine. In terms of domain architecture, IRG-type G spans 68-250 (SVLNVAVTGE…PVLMDKLISD (183 aa)). GDP is bound by residues Gly-79, Gly-81, Lys-82, Ser-83, Ser-84, Thr-102, and Gly-103. Residue Thr-102 is modified to (Microbial infection) Phosphothreonine; by ROP18. Thr-108 carries the post-translational modification (Microbial infection) Phosphothreonine; by ROP18. Positions 184, 186, 187, and 232 each coordinate GDP. An intrachain disulfide couples Cys-236 to Cys-410.

This sequence belongs to the TRAFAC class dynamin-like GTPase superfamily. IRG family. In terms of assembly, monomer, as apoenzyme and in the GDP-bound form. Homooligomer, upon GTP binding. Interacts with HOOK3. As to quaternary structure, (Microbial infection) Interacts with Toxoplasma gondii GRA7 in GTP-dependent manner; the interaction results in faster turnover of the GTP-activated IIGP1 oligomer. Interacts with T.gondii ROP5; the interaction results in inhibition of IRGA6/IIGP1 GTPase activity and oligomerization. In terms of processing, myristoylated. (Microbial infection) Phosphorylated by Toxoplasma gondii ROP18 from virulent strains.

The protein localises to the cytoplasm. Its subcellular location is the nucleus membrane. It is found in the endoplasmic reticulum membrane. The protein resides in the golgi apparatus. It localises to the golgi stack membrane. The protein localises to the parasitophorous vacuole membrane. It carries out the reaction GTP + H2O = GDP + phosphate + H(+). Its function is as follows. GTPase with low activity. Has higher affinity for GDP than for GTP. Plays a role in resistance to intracellular pathogens. During infection with avirulent Toxoplasma gondii strains, recruited to the parasitophorous vacuole membrane. Required for disruption of the parasitophorous vacuole formed following T.gondii infection and subsequent killing of the parasite. Mediates resistance to Chlamydia trachomatis infection by targeting bacterial inclusions to autophagosomes for subsequent lysosomal destruction. This chain is Interferon-inducible GTPase 1 (Iigp1), found in Mus musculus (Mouse).